The following is a 214-amino-acid chain: Cell division protein SepF (214 aa).

The disordered stretch occupies residues 23–70 (YYDDRAPSRGFPRPRFDDGYGRYDGDDYDDPRREPADYPPPAGYRGGY). Residues 36 to 58 (PRFDDGYGRYDGDDYDDPRREPA) are compositionally biased toward basic and acidic residues.

It belongs to the SepF family. Homodimer. Interacts with FtsZ.

The protein resides in the cytoplasm. Functionally, cell division protein that is part of the divisome complex and is recruited early to the Z-ring. Probably stimulates Z-ring formation, perhaps through the cross-linking of FtsZ protofilaments. Its function overlaps with FtsA. This is Cell division protein SepF from Mycobacterium avium (strain 104).